A 112-amino-acid chain; its full sequence is DNA-binding protein TSIB_0525 (112 aa).

The protein belongs to the PDCD5 family.

In Thermococcus sibiricus (strain DSM 12597 / MM 739), this protein is DNA-binding protein TSIB_0525.